A 306-amino-acid chain; its full sequence is Axin interactor, dorsalization-associated protein (306 aa).

A coiled-coil region spans residues 27–62; the sequence is QLVEAIDEYQILARHLQKEAQAQHNNSEFTEEQKKT. Acidic residues predominate over residues 128 to 138; sequence NLEFEEDEEEG. The interval 128–153 is disordered; sequence NLEFEEDEEEGGAGAGSPDSFPARVP. Ser144 bears the Phosphoserine mark. The segment at 154-221 is axin-binding; that stretch reads GTLLPRLPSE…RKEDTYVHFN (68 aa). The C2 Aida-type domain maps to 157 to 304; that stretch reads LPRLPSEPGM…LYLHLHQTLH (148 aa).

This sequence belongs to the AIDA family. In terms of assembly, interacts with AXIN1. In terms of tissue distribution, widely expressed in adult tissues, with highest expression in the heart and skeletal muscle.

Acts as a ventralizing factor during embryogenesis. Inhibits axin-mediated JNK activation by binding axin and disrupting axin homodimerization. This in turn antagonizes a Wnt/beta-catenin-independent dorsalization pathway activated by AXIN/JNK-signaling. The sequence is that of Axin interactor, dorsalization-associated protein (AIDA) from Homo sapiens (Human).